The sequence spans 315 residues: MTAFLDFEKQVAALDRQIAELREMGDDPTLDIEGDIARLEDKSAKLLRDIYARLTPWQKTQVARHPDRPHFKHYVAGLFDDWMPLAGDRNFADDQAILGGLARFRGRRVMVIGHEKGDDIPSRMKHNFGMAKPEGYRKAIRLMQLADRFGLPVITLVDTSGAFPGIQAEERGQAEAIARSTEQCLALGVPMVAAVVGEGGSGGAIALAAANRVLMFEHAVYSVISPEGCASILWRTSDKAAEAAAAMKMSAQDLLALKIIDRIVPEPVGGAHRAPEAAIAALGDALEQELNGLSGLPRDTLLAAREEKFLAMGRA.

The CoA carboxyltransferase C-terminal domain maps to Leu39 to Gly292.

Belongs to the AccA family. In terms of assembly, acetyl-CoA carboxylase is a heterohexamer composed of biotin carboxyl carrier protein (AccB), biotin carboxylase (AccC) and two subunits each of ACCase subunit alpha (AccA) and ACCase subunit beta (AccD).

It is found in the cytoplasm. It catalyses the reaction N(6)-carboxybiotinyl-L-lysyl-[protein] + acetyl-CoA = N(6)-biotinyl-L-lysyl-[protein] + malonyl-CoA. The protein operates within lipid metabolism; malonyl-CoA biosynthesis; malonyl-CoA from acetyl-CoA: step 1/1. Component of the acetyl coenzyme A carboxylase (ACC) complex. First, biotin carboxylase catalyzes the carboxylation of biotin on its carrier protein (BCCP) and then the CO(2) group is transferred by the carboxyltransferase to acetyl-CoA to form malonyl-CoA. The protein is Acetyl-coenzyme A carboxylase carboxyl transferase subunit alpha of Sphingopyxis alaskensis (strain DSM 13593 / LMG 18877 / RB2256) (Sphingomonas alaskensis).